Here is a 286-residue protein sequence, read N- to C-terminus: Digeranylgeranylglyceryl phosphate synthase (286 aa).

The next 8 helical transmembrane spans lie at 21-41 (AVAA…FAVT), 42-62 (TAHV…GNAI), 96-116 (FLFV…IVLA), 133-155 (LPGV…GAAA), 162-181 (FGVV…REII), 214-234 (VLLV…FGIW), 235-255 (YLTL…QAPD), and 266-286 (RGMF…VAGI).

The protein belongs to the UbiA prenyltransferase family. DGGGP synthase subfamily. The cofactor is Mg(2+).

It localises to the cell membrane. The enzyme catalyses sn-3-O-(geranylgeranyl)glycerol 1-phosphate + (2E,6E,10E)-geranylgeranyl diphosphate = 2,3-bis-O-(geranylgeranyl)-sn-glycerol 1-phosphate + diphosphate. It participates in membrane lipid metabolism; glycerophospholipid metabolism. Its function is as follows. Prenyltransferase that catalyzes the transfer of the geranylgeranyl moiety of geranylgeranyl diphosphate (GGPP) to the C2 hydroxyl of (S)-3-O-geranylgeranylglyceryl phosphate (GGGP). This reaction is the second ether-bond-formation step in the biosynthesis of archaeal membrane lipids. This is Digeranylgeranylglyceryl phosphate synthase from Haloquadratum walsbyi (strain DSM 16790 / HBSQ001).